The primary structure comprises 160 residues: Baculoviral IAP repeat-containing protein 5.1 (160 aa).

The stretch at 27 to 97 (RLATFADWPF…KRSASCGFLS (71 aa)) is one BIR repeat. Threonine 43 carries the post-translational modification Phosphothreonine; by CDK1. Residues cysteine 66, cysteine 69, histidine 86, and cysteine 93 each coordinate Zn(2+).

Belongs to the IAP family. In terms of assembly, component of the CPC at least composed of survivin/birc5, incenp, cdca8/borealin and/or cdca9/dasra-A, and aurkb/aurora-B. Interacts directly with incenp (via N-terminus), and may weakly interact with aurkb (via N-terminus) to stabilize the complex. Interacts with GTP-bound ran in both the S and M phases of the cell cycle. Also found in a complex with ubiquitin-mediated signaling proteins including at least usp9x/xFAM, nploc4/npl4 and ufd1. Ubiquitination is required for centrosome-targeting.

It is found in the cytoplasm. It localises to the nucleus. Its subcellular location is the chromosome. The protein resides in the centromere. The protein localises to the cytoskeleton. It is found in the spindle. In terms of biological role, component of the chromosomal passenger complex (CPC), a complex that acts as a key regulator of mitosis. The CPC complex has essential functions at the centromere in ensuring correct chromosome alignment and segregation and is required for chromatin-induced microtubule stabilization and spindle assembly. Stimulates the mitotic kinase activity of aurkb/aurora-B in the CPC. Does not appear to exhibit anti-apoptotic activity. This Xenopus tropicalis (Western clawed frog) protein is Baculoviral IAP repeat-containing protein 5.1 (birc5.1).